A 347-amino-acid chain; its full sequence is Sesquiterpene synthase M422DRAFT_47084 (347 aa).

Positions 93, 228, 232, and 236 each coordinate Mg(2+). The DDXXD motif signature appears at 93 to 97 (DEYTD). (2E,6E)-farnesyl diphosphate-binding residues include R318 and Y319.

The protein belongs to the terpene synthase family. Mg(2+) serves as cofactor.

The enzyme catalyses (2E,6E)-farnesyl diphosphate = viridiflorene + diphosphate. Terpene cyclase that catalyzes the cyclization of farnesyl diphosphate (FPP) to viridiflorene and viridiflorol. The sequence is that of Sesquiterpene synthase M422DRAFT_47084 from Sphaerobolus stellatus (strain SS14).